The sequence spans 171 residues: Crossover junction endodeoxyribonuclease RuvC (171 aa).

Residues aspartate 7, glutamate 67, and aspartate 139 contribute to the active site. Positions 7, 67, and 139 each coordinate Mg(2+).

It belongs to the RuvC family. Homodimer which binds Holliday junction (HJ) DNA. The HJ becomes 2-fold symmetrical on binding to RuvC with unstacked arms; it has a different conformation from HJ DNA in complex with RuvA. In the full resolvosome a probable DNA-RuvA(4)-RuvB(12)-RuvC(2) complex forms which resolves the HJ. Mg(2+) is required as a cofactor.

Its subcellular location is the cytoplasm. The catalysed reaction is Endonucleolytic cleavage at a junction such as a reciprocal single-stranded crossover between two homologous DNA duplexes (Holliday junction).. Its function is as follows. The RuvA-RuvB-RuvC complex processes Holliday junction (HJ) DNA during genetic recombination and DNA repair. Endonuclease that resolves HJ intermediates. Cleaves cruciform DNA by making single-stranded nicks across the HJ at symmetrical positions within the homologous arms, yielding a 5'-phosphate and a 3'-hydroxyl group; requires a central core of homology in the junction. The consensus cleavage sequence is 5'-(A/T)TT(C/G)-3'. Cleavage occurs on the 3'-side of the TT dinucleotide at the point of strand exchange. HJ branch migration catalyzed by RuvA-RuvB allows RuvC to scan DNA until it finds its consensus sequence, where it cleaves and resolves the cruciform DNA. The polypeptide is Crossover junction endodeoxyribonuclease RuvC (Geotalea uraniireducens (strain Rf4) (Geobacter uraniireducens)).